We begin with the raw amino-acid sequence, 699 residues long: Elongation factor G (699 aa).

Residues 8-288 (EDYRNFGIMA…AVVDYLPSPL (281 aa)) enclose the tr-type G domain. GTP contacts are provided by residues 17–24 (AHIDAGKT), 86–90 (DTPGH), and 140–143 (NKMD).

This sequence belongs to the TRAFAC class translation factor GTPase superfamily. Classic translation factor GTPase family. EF-G/EF-2 subfamily.

The protein localises to the cytoplasm. Its function is as follows. Catalyzes the GTP-dependent ribosomal translocation step during translation elongation. During this step, the ribosome changes from the pre-translocational (PRE) to the post-translocational (POST) state as the newly formed A-site-bound peptidyl-tRNA and P-site-bound deacylated tRNA move to the P and E sites, respectively. Catalyzes the coordinated movement of the two tRNA molecules, the mRNA and conformational changes in the ribosome. This Rhizobium etli (strain CIAT 652) protein is Elongation factor G.